Consider the following 73-residue polypeptide: Mu-scoloptoxin(15)-Ssd1a (73 aa).

The first 20 residues, 1-20 (MKFHIIFCLLAALMMTSAFA), serve as a signal peptide directing secretion.

Post-translationally, contains 2 disulfide bonds. Expressed by the venom gland.

The protein resides in the secreted. In terms of biological role, voltage-gated sodium channel inhibitor. In Scolopendra dehaani (Thai centipede), this protein is Mu-scoloptoxin(15)-Ssd1a.